A 335-amino-acid polypeptide reads, in one-letter code: Glycerol-3-phosphate dehydrogenase [NAD(P)+] (335 aa).

4 residues coordinate NADPH: Ser10, Phe11, Arg31, and Lys105. 3 residues coordinate sn-glycerol 3-phosphate: Lys105, Gly136, and Ser138. Residue Ala140 participates in NADPH binding. Lys191, Asp244, Ser254, Arg255, and Asn256 together coordinate sn-glycerol 3-phosphate. The active-site Proton acceptor is Lys191. Residue Arg255 coordinates NADPH. Val279 and Glu281 together coordinate NADPH.

This sequence belongs to the NAD-dependent glycerol-3-phosphate dehydrogenase family.

It localises to the cytoplasm. It carries out the reaction sn-glycerol 3-phosphate + NAD(+) = dihydroxyacetone phosphate + NADH + H(+). The enzyme catalyses sn-glycerol 3-phosphate + NADP(+) = dihydroxyacetone phosphate + NADPH + H(+). The protein operates within membrane lipid metabolism; glycerophospholipid metabolism. In terms of biological role, catalyzes the reduction of the glycolytic intermediate dihydroxyacetone phosphate (DHAP) to sn-glycerol 3-phosphate (G3P), the key precursor for phospholipid synthesis. This is Glycerol-3-phosphate dehydrogenase [NAD(P)+] from Leptospira interrogans serogroup Icterohaemorrhagiae serovar copenhageni (strain Fiocruz L1-130).